The sequence spans 511 residues: D-alanine--D-alanyl carrier protein ligase (511 aa).

Residue 152–153 (TS) participates in ATP binding. Asp199 is a D-alanine binding site. 294–299 (NAYGPT) contacts ATP. A D-alanine-binding site is contributed by Val303. ATP is bound by residues Asp385, 397–400 (YGGR), and Lys499. Residue Lys499 participates in D-alanine binding.

Belongs to the ATP-dependent AMP-binding enzyme family. DltA subfamily.

Its subcellular location is the cytoplasm. It carries out the reaction holo-[D-alanyl-carrier protein] + D-alanine + ATP = D-alanyl-[D-alanyl-carrier protein] + AMP + diphosphate. The protein operates within cell wall biogenesis; lipoteichoic acid biosynthesis. Functionally, catalyzes the first step in the D-alanylation of lipoteichoic acid (LTA), the activation of D-alanine and its transfer onto the D-alanyl carrier protein (Dcp) DltC. In an ATP-dependent two-step reaction, forms a high energy D-alanyl-AMP intermediate, followed by transfer of the D-alanyl residue as a thiol ester to the phosphopantheinyl prosthetic group of the Dcp. D-alanylation of LTA plays an important role in modulating the properties of the cell wall in Gram-positive bacteria, influencing the net charge of the cell wall. This is D-alanine--D-alanyl carrier protein ligase from Streptococcus agalactiae serotype III (strain NEM316).